A 152-amino-acid chain; its full sequence is Snaclec coagulation factor IX/factor X-binding protein subunit A (152 aa).

The first 23 residues, 1-23 (MGRFIFLSFGLLVVFLSLSGTGA), serve as a signal peptide directing secretion. Disulfide bonds link C25–C36, C53–C150, and C125–C142. Residues 32–151 (YEGHCYNIFH…CGERNPFVCE (120 aa)) enclose the C-type lectin domain. Ca(2+) is bound by residues S64, E66, and E70. E151 lines the Ca(2+) pocket.

This sequence belongs to the snaclec family. As to quaternary structure, heterodimer of subunits A and B; disulfide-linked. As to expression, expressed by the venom gland.

It localises to the secreted. Functionally, anticoagulant protein which binds to the gamma-carboxyglutamic acid-domain regions of factors IX (F9) and factor X (F10) in the presence of calcium with a 1 to 1 stoichiometry. The chain is Snaclec coagulation factor IX/factor X-binding protein subunit A from Gloydius halys (Chinese water mocassin).